Consider the following 102-residue polypeptide: Complement inhibitor RaCI6 (102 aa).

The first 24 residues, 1–24 (MAALNGLVLLLLTISAMFISECYS), serve as a signal peptide directing secretion. 2 disulfide bridges follow: C37/C61 and C42/C63.

The protein belongs to the RaCI family. As to expression, expressed in salivary glands.

The protein localises to the secreted. Complement inhibitor. Prevents complement-mediated C5 activation by binding to C5. Binds C5 at a different binding site than the other tick complement inhibitors OmCI and CirpT1, and the drug eculizumab. In Dermacentor andersoni (Rocky mountain wood tick), this protein is Complement inhibitor RaCI6.